Consider the following 141-residue polypeptide: Protein archease (141 aa).

Residues D19 and D140 each coordinate Ca(2+).

The protein belongs to the archease family.

In terms of biological role, activates the tRNA-splicing ligase complex by facilitating the enzymatic turnover of catalytic subunit RtcB. Acts by promoting the guanylylation of RtcB, a key intermediate step in tRNA ligation. Can also alter the NTP specificity of RtcB such that ATP, dGTP or ITP is used efficiently. This Thermoplasma acidophilum (strain ATCC 25905 / DSM 1728 / JCM 9062 / NBRC 15155 / AMRC-C165) protein is Protein archease.